The primary structure comprises 106 residues: MPFLDIQKRFGLNIDRWLTTQSAEQPYKMASRCHAFEKEWIECAHGIGYTRAEKECKIEYDDFIECLLRQKTMRRTGTIRKQRDKLIKEGKYTPPPHHIGKGEPRP.

The CHCH domain occupies 30–74 (ASRCHAFEKEWIECAHGIGYTRAEKECKIEYDDFIECLLRQKTMR). Short sequence motifs (cx9C motif) lie at residues 33 to 43 (CHAFEKEWIEC) and 56 to 66 (CKIEYDDFIEC). Cystine bridges form between Cys33–Cys66 and Cys43–Cys56. Positions 78-106 (TIRKQRDKLIKEGKYTPPPHHIGKGEPRP) are disordered.

Belongs to the complex I NDUFS5 subunit family. Mammalian complex I is composed of 45 different subunits. This is a component of the iron-sulfur (IP) fragment of the enzyme.

It is found in the mitochondrion inner membrane. The protein resides in the mitochondrion intermembrane space. Functionally, accessory subunit of the mitochondrial membrane respiratory chain NADH dehydrogenase (Complex I), that is believed not to be involved in catalysis. Complex I functions in the transfer of electrons from NADH to the respiratory chain. The immediate electron acceptor for the enzyme is believed to be ubiquinone. The polypeptide is NADH dehydrogenase [ubiquinone] iron-sulfur protein 5 (NDUFS5) (Pongo abelii (Sumatran orangutan)).